The chain runs to 278 residues: Pantothenate synthetase (278 aa).

30-37 (MGGLHQGH) lines the ATP pocket. Histidine 37 functions as the Proton donor in the catalytic mechanism. Glutamine 61 contacts (R)-pantoate. Glutamine 61 is a binding site for beta-alanine. 146-149 (GQKD) is a binding site for ATP. Glutamine 152 serves as a coordination point for (R)-pantoate. Residues isoleucine 175 and 183-186 (MSTR) contribute to the ATP site.

Belongs to the pantothenate synthetase family. Homodimer.

The protein resides in the cytoplasm. It carries out the reaction (R)-pantoate + beta-alanine + ATP = (R)-pantothenate + AMP + diphosphate + H(+). Its pathway is cofactor biosynthesis; (R)-pantothenate biosynthesis; (R)-pantothenate from (R)-pantoate and beta-alanine: step 1/1. Catalyzes the condensation of pantoate with beta-alanine in an ATP-dependent reaction via a pantoyl-adenylate intermediate. The protein is Pantothenate synthetase of Ruthia magnifica subsp. Calyptogena magnifica.